The chain runs to 495 residues: Germacrene A acid 8-beta-hydroxylase (495 aa).

A helical; Signal-anchor for type II membrane protein transmembrane segment spans residues 3–23; it reads PFTTFSLVASSLILLICWALV. Asn-103 carries N-linked (GlcNAc...) asparagine glycosylation. Cys-433 serves as a coordination point for heme.

This sequence belongs to the cytochrome P450 family. The cofactor is heme. As to expression, mostly expressed in leaves and flowers, and, to a lower extent, in roots and stems.

The protein localises to the membrane. It catalyses the reaction germacra-1(10),4,11(13)-trien-12-oate + reduced [NADPH--hemoprotein reductase] + O2 = 8beta-hydroxygermacra-1(10),4,11(13)-trien-12-oate + oxidized [NADPH--hemoprotein reductase] + H2O + H(+). The enzyme catalyses germacra-1(10),4,11(13)-trien-12-oate + reduced [NADPH--hemoprotein reductase] + O2 = 8-epi-inunolide + oxidized [NADPH--hemoprotein reductase] + 2 H2O. It carries out the reaction germacra-1(10),4,11(13)-trien-12-oate + reduced [NADPH--hemoprotein reductase] + O2 = 8alpha-hydroxygermacra-1(10),4,11(13)-trien-12-oate + oxidized [NADPH--hemoprotein reductase] + H2O + H(+). It functions in the pathway secondary metabolite biosynthesis; terpenoid biosynthesis. Its function is as follows. Involved in the biosynthesis of germacrene-derived sesquiterpene lactones. Hydroxylates germacrene A acid to 8-beta-hydroxy-germacrene A and 8-alpha-hydroxy-germacrene A acids. Unlike 8-alpha-hydroxy-germacrene A acid with is spontaneously converted into inunolide (12, 8-alpha), 8-beta-hydroxy-germacrene A cannot undergo spontaneous lactonization. This chain is Germacrene A acid 8-beta-hydroxylase, found in Inula hupehensis (Inula helianthus-aquatilis subsp. hupehensis).